A 470-amino-acid polypeptide reads, in one-letter code: MSIVRQSCDCCRVRRVKCDRNRPCDRCRQRNLRCTYLQPLRKRGPKSIGESNLERAAEIQMVTVNNNIMAAPVMYKKVPKKVIDQCLRLYHDQLYVIWPMLSYDDLYKLLEENYEDCSTYWFLVSLSAATLSDLHTKIEYKKGFFFAGEQLCNLCMSSRRFFDDLSNSDIFRIMTYYCLHRCYAQFADTRTSYRLSCEAIGLIKIAGFHREETYEFLPFGEQQLIRKVYYLLLMTERYYAVYIKCVTSLDTTISPPQPEIVTDSRLSLDSFLEVIKVFTVPGKYFYDALATNSVNGSYTEDSLKRIWNELHISSLDIEPYSYGYIDYLFSRHWVRTLAWKLVLNKKDMRMNFFSNTNATHIPVEIAKDMLQDTLLTPIDLYDVHGPVIPMKALEIANALVDVVSKYDHNMKLEAWNILCDVSKFVFSLKHCNHKMFQRFSTKCQSALIDLPISRPLRLNDDSKDEVDIIP.

The segment at residues 8–34 is a DNA-binding region (zn(2)-C6 fungal-type); that stretch reads CDCCRVRRVKCDRNRPCDRCRQRNLRC. Residues 41 to 49 carry the Nuclear localization signal motif; the sequence is RKRGPKSIG.

It belongs to the MAL13 family.

The protein resides in the nucleus. May regulate the transcription of maltase and maltose permease genes. This is Maltose fermentation regulatory protein YPR196W from Saccharomyces cerevisiae (strain ATCC 204508 / S288c) (Baker's yeast).